The sequence spans 459 residues: Methylenetetrahydrofolate--tRNA-(uracil-5-)-methyltransferase TrmFO (459 aa).

15 to 20 serves as a coordination point for FAD; that stretch reads GAGLAG.

This sequence belongs to the MnmG family. TrmFO subfamily. The cofactor is FAD.

It localises to the cytoplasm. The enzyme catalyses uridine(54) in tRNA + (6R)-5,10-methylene-5,6,7,8-tetrahydrofolate + NADH + H(+) = 5-methyluridine(54) in tRNA + (6S)-5,6,7,8-tetrahydrofolate + NAD(+). It carries out the reaction uridine(54) in tRNA + (6R)-5,10-methylene-5,6,7,8-tetrahydrofolate + NADPH + H(+) = 5-methyluridine(54) in tRNA + (6S)-5,6,7,8-tetrahydrofolate + NADP(+). Its function is as follows. Catalyzes the folate-dependent formation of 5-methyl-uridine at position 54 (M-5-U54) in all tRNAs. The polypeptide is Methylenetetrahydrofolate--tRNA-(uracil-5-)-methyltransferase TrmFO (Syntrophotalea carbinolica (strain DSM 2380 / NBRC 103641 / GraBd1) (Pelobacter carbinolicus)).